Reading from the N-terminus, the 202-residue chain is Dephospho-CoA kinase (202 aa).

The DPCK domain occupies 3-200; the sequence is TIGLTGGIGS…QRYLTLAANR (198 aa). 11-16 contacts ATP; that stretch reads GSGKSA.

Belongs to the CoaE family.

The protein resides in the cytoplasm. The catalysed reaction is 3'-dephospho-CoA + ATP = ADP + CoA + H(+). Its pathway is cofactor biosynthesis; coenzyme A biosynthesis; CoA from (R)-pantothenate: step 5/5. Functionally, catalyzes the phosphorylation of the 3'-hydroxyl group of dephosphocoenzyme A to form coenzyme A. The polypeptide is Dephospho-CoA kinase (Thiobacillus denitrificans (strain ATCC 25259 / T1)).